The primary structure comprises 206 residues: Large ribosomal subunit protein uL3 (206 aa).

Residues 127 to 151 form a disordered region; it reads SGGPSSHGSKFHRHLGGTGQATTPA.

This sequence belongs to the universal ribosomal protein uL3 family. Part of the 50S ribosomal subunit. Forms a cluster with proteins L14 and L19.

Its function is as follows. One of the primary rRNA binding proteins, it binds directly near the 3'-end of the 23S rRNA, where it nucleates assembly of the 50S subunit. The protein is Large ribosomal subunit protein uL3 of Borreliella afzelii (strain PKo) (Borrelia afzelii).